Here is a 298-residue protein sequence, read N- to C-terminus: Inosose dehydratase (298 aa).

It belongs to the IolE/MocC family. The cofactor is glutathione. Co(2+) is required as a cofactor. It depends on Mn(2+) as a cofactor.

It catalyses the reaction scyllo-inosose = 3D-3,5/4-trihydroxycyclohexane-1,2-dione + H2O. Its function is as follows. Catalyzes the dehydration of inosose (2-keto-myo-inositol, 2KMI or 2,4,6/3,5-pentahydroxycyclohexanone) to 3D-(3,5/4)-trihydroxycyclohexane-1,2-dione (D-2,3-diketo-4-deoxy-epi-inositol). The sequence is that of Inosose dehydratase from Erwinia tasmaniensis (strain DSM 17950 / CFBP 7177 / CIP 109463 / NCPPB 4357 / Et1/99).